Consider the following 121-residue polypeptide: MARIAGVNIPNHQHTEIGLTAIYGVGRTRSRDICVAAGVAFSKKVKDLNDADLEKLREEVGKFIVEGDLRRETTMNIKRLMDLGCYRGVRHRKGLPLRGQRTRTNARTRKGPRRAAQSLKK.

Positions 94–121 (GLPLRGQRTRTNARTRKGPRRAAQSLKK) are disordered.

This sequence belongs to the universal ribosomal protein uS13 family. As to quaternary structure, part of the 30S ribosomal subunit. Forms a loose heterodimer with protein S19. Forms two bridges to the 50S subunit in the 70S ribosome.

Functionally, located at the top of the head of the 30S subunit, it contacts several helices of the 16S rRNA. In the 70S ribosome it contacts the 23S rRNA (bridge B1a) and protein L5 of the 50S subunit (bridge B1b), connecting the 2 subunits; these bridges are implicated in subunit movement. Contacts the tRNAs in the A and P-sites. The sequence is that of Small ribosomal subunit protein uS13 from Paraburkholderia phytofirmans (strain DSM 17436 / LMG 22146 / PsJN) (Burkholderia phytofirmans).